The primary structure comprises 1039 residues: FERM domain-containing protein 4A (1039 aa).

An FERM domain is found at R20–K322. The necessary for interaction with CYTH1 stretch occupies residues K358–T420. Positions S366–S382 are enriched in low complexity. The interval S366–D386 is disordered. Positions S382 to E416 form a coiled coil. At S530 the chain carries Phosphoserine. Residues D553–R680 are disordered. Pro residues predominate over residues G571–Q586. A necessary for tight junction and adherens junction localization; Requires for interaction with PARD3 region spans residues H579 to H939. Phosphoserine occurs at positions 604 and 615. Over residues V623 to F638 the composition is skewed to basic residues. Residues S681 and S711 each carry the phosphoserine modification. Disordered regions lie at residues E713–S756 and A772–A813. The span at R788 to S800 shows a compositional bias: low complexity. Phosphoserine is present on residues S800, S872, and S901. 2 disordered regions span residues F879 to V968 and C980 to E1039. Polar residues predominate over residues L896–R905. Over residues E912 to R929 the composition is skewed to basic and acidic residues. A compositionally biased stretch (low complexity) spans S946–T966. 2 stretches are compositionally biased toward polar residues: residues A986–I1000 and T1013–S1023.

Interacts (via coiled-coil domain) with CYTH1 (via coiled-coil domain). Interacts with PARD3 (via coiled-coil domain). Found in a complex with PARD3, CYTH1 and FRMD4A. Interacts with CYTH2. Interacts with CYTH3.

The protein localises to the cytoplasm. Its subcellular location is the cytoskeleton. It localises to the cell junction. It is found in the adherens junction. The protein resides in the tight junction. Scaffolding protein that regulates epithelial cell polarity by connecting ARF6 activation with the PAR3 complex. Plays a redundant role with FRMD4B in epithelial polarization. May regulate MAPT secretion by activating ARF6-signaling. This is FERM domain-containing protein 4A from Homo sapiens (Human).